The following is a 237-amino-acid chain: Cysteine-rich venom protein tigrin (237 aa).

The signal sequence occupies residues 1–18 (MIVFILLSLAAVLRQSFG). The region spanning 37–165 (VNIHNSFRRS…LYNYFYVCQY (129 aa)) is the SCP domain. 8 disulfides stabilise this stretch: Cys-74/Cys-152, Cys-91/Cys-166, Cys-147/Cys-163, Cys-185/Cys-192, Cys-188/Cys-197, Cys-201/Cys-232, Cys-210/Cys-226, and Cys-217/Cys-230. The 32-residue stretch at 201–232 (CTHKDDYNNCNSLVSDCQSDWDKSHCPATCFC) folds into the ShKT domain.

The protein belongs to the CRISP family. In terms of tissue distribution, expressed by the venom gland.

Its subcellular location is the secreted. Its function is as follows. This protein does not inhibit smooth muscle contraction elicited by high potassium levels or caffeine. The sequence is that of Cysteine-rich venom protein tigrin from Rhabdophis tigrinus tigrinus (Tiger keelback snake).